Reading from the N-terminus, the 78-residue chain is Acyl carrier protein (78 aa).

A Carrier domain is found at 2 to 77; it reads STIEERVKKI…AAIDYVNSHK (76 aa). Position 37 is an O-(pantetheine 4'-phosphoryl)serine (Ser-37).

This sequence belongs to the acyl carrier protein (ACP) family. 4'-phosphopantetheine is transferred from CoA to a specific serine of apo-ACP by AcpS. This modification is essential for activity because fatty acids are bound in thioester linkage to the sulfhydryl of the prosthetic group.

The protein resides in the cytoplasm. Its pathway is lipid metabolism; fatty acid biosynthesis. In terms of biological role, carrier of the growing fatty acid chain in fatty acid biosynthesis. In Pseudomonas putida (strain GB-1), this protein is Acyl carrier protein.